Consider the following 678-residue polypeptide: Protein mono-ADP-ribosyltransferase PARP15 (678 aa).

Low complexity predominate over residues 1-19 (MAAPGPLPAAALSPGAPTP). Residues 1–67 (MAAPGPLPAA…SSRSMSRDNK (67 aa)) form a disordered region. A compositionally biased stretch (basic residues) spans 49 to 58 (GARKASRRSS). Macro domains are found at residues 78-267 (NVVA…TNWS) and 293-464 (CFTA…KKRD). Substrate is bound by residues 312-313 (DI), 324-325 (ST), R331, V335, 409-413 (GTGNA), and Q449. The region spanning 482 to 678 (LPEHWTDMNH…YPEYLITFTA (197 aa)) is the PARP catalytic domain.

Belongs to the ARTD/PARP family.

It is found in the nucleus. The enzyme catalyses L-aspartyl-[protein] + NAD(+) = 4-O-(ADP-D-ribosyl)-L-aspartyl-[protein] + nicotinamide. It carries out the reaction L-glutamyl-[protein] + NAD(+) = 5-O-(ADP-D-ribosyl)-L-glutamyl-[protein] + nicotinamide. In terms of biological role, mono-ADP-ribosyltransferase that mediates mono-ADP-ribosylation of target proteins. Acts as a negative regulator of transcription. In Homo sapiens (Human), this protein is Protein mono-ADP-ribosyltransferase PARP15.